We begin with the raw amino-acid sequence, 253 residues long: Histone H1.4 (253 aa).

The segment covering 1–33 has biased composition (low complexity); that stretch reads MSDVAVAADTTETPAAPTKASKATKASKATKAS. Residues 1–43 are disordered; sequence MSDVAVAADTTETPAAPTKASKATKASKATKASKATKAKTTKV. An N-acetylserine modification is found at S2. The H15 domain occupies 51–127; sequence AHPPFINMVT…GANGRFRLAE (77 aa). Residues 134–253 form a disordered region; sequence KSPAAAKKDA…KKAPAAAPEA (120 aa). Composition is skewed to basic and acidic residues over residues 139 to 149 and 188 to 200; these read AKKDATGEKKA and AAGD…EVKV. Composition is skewed to basic residues over residues 201–210 and 234–244; these read KKVKSPKKIA and APKKAAAKPAK.

It belongs to the histone H1/H5 family.

It localises to the nucleus. Its subcellular location is the chromosome. Functionally, histones H1 are necessary for the condensation of nucleosome chains into higher-order structures. The protein is Histone H1.4 (hil-4) of Caenorhabditis elegans.